A 156-amino-acid chain; its full sequence is Ribosomal RNA large subunit methyltransferase H (156 aa).

Residues leucine 73, glycine 104, and 123 to 128 (LSPLTL) contribute to the S-adenosyl-L-methionine site.

It belongs to the RNA methyltransferase RlmH family. In terms of assembly, homodimer.

The protein resides in the cytoplasm. The enzyme catalyses pseudouridine(1915) in 23S rRNA + S-adenosyl-L-methionine = N(3)-methylpseudouridine(1915) in 23S rRNA + S-adenosyl-L-homocysteine + H(+). Functionally, specifically methylates the pseudouridine at position 1915 (m3Psi1915) in 23S rRNA. In Yersinia pseudotuberculosis serotype O:1b (strain IP 31758), this protein is Ribosomal RNA large subunit methyltransferase H.